We begin with the raw amino-acid sequence, 106 residues long: Large ribosomal subunit protein uL24 (106 aa).

It belongs to the universal ribosomal protein uL24 family. Part of the 50S ribosomal subunit.

One of two assembly initiator proteins, it binds directly to the 5'-end of the 23S rRNA, where it nucleates assembly of the 50S subunit. Its function is as follows. One of the proteins that surrounds the polypeptide exit tunnel on the outside of the subunit. This Paramagnetospirillum magneticum (strain ATCC 700264 / AMB-1) (Magnetospirillum magneticum) protein is Large ribosomal subunit protein uL24.